The primary structure comprises 693 residues: Glycine--tRNA ligase beta subunit (693 aa).

This sequence belongs to the class-II aminoacyl-tRNA synthetase family. As to quaternary structure, tetramer of two alpha and two beta subunits.

It is found in the cytoplasm. The enzyme catalyses tRNA(Gly) + glycine + ATP = glycyl-tRNA(Gly) + AMP + diphosphate. This is Glycine--tRNA ligase beta subunit (glyS) from Halalkalibacterium halodurans (strain ATCC BAA-125 / DSM 18197 / FERM 7344 / JCM 9153 / C-125) (Bacillus halodurans).